The chain runs to 153 residues: Interleukin-4 (153 aa).

Positions 1–24 (MGLTSQLLPPLFFLLACAGNFAHG) are cleaved as a signal peptide. Intrachain disulfides connect Cys-27/Cys-151, Cys-48/Cys-89, and Cys-70/Cys-123. N-linked (GlcNAc...) asparagine glycosylation is present at Asn-62.

Belongs to the IL-4/IL-13 family.

The protein resides in the secreted. Its function is as follows. Participates in at least several B-cell activation processes as well as of other cell types. It is a costimulator of DNA-synthesis. It induces the expression of class II MHC molecules on resting B-cells. It enhances both secretion and cell surface expression of IgE and IgG1. It also regulates the expression of the low affinity Fc receptor for IgE (CD23) on both lymphocytes and monocytes. Positively regulates IL31RA expression in macrophages. Stimulates autophagy in dendritic cells by interfering with mTORC1 signaling and through the induction of RUFY4. This is Interleukin-4 (IL4) from Cercocebus atys (Sooty mangabey).